The sequence spans 155 residues: NADPH-dependent 7-cyano-7-deazaguanine reductase (155 aa).

The Thioimide intermediate role is filled by C53. D60 functions as the Proton donor in the catalytic mechanism. Substrate-binding positions include 75 to 77 (VES) and 94 to 95 (HE).

Belongs to the GTP cyclohydrolase I family. QueF type 1 subfamily.

Its subcellular location is the cytoplasm. The catalysed reaction is 7-aminomethyl-7-carbaguanine + 2 NADP(+) = 7-cyano-7-deazaguanine + 2 NADPH + 3 H(+). It functions in the pathway tRNA modification; tRNA-queuosine biosynthesis. In terms of biological role, catalyzes the NADPH-dependent reduction of 7-cyano-7-deazaguanine (preQ0) to 7-aminomethyl-7-deazaguanine (preQ1). The sequence is that of NADPH-dependent 7-cyano-7-deazaguanine reductase from Ruegeria pomeroyi (strain ATCC 700808 / DSM 15171 / DSS-3) (Silicibacter pomeroyi).